The primary structure comprises 404 residues: Cysteine desulfurase IscS (404 aa).

Pyridoxal 5'-phosphate-binding positions include 75–76 (AT), N155, Q183, and 203–205 (SAH). Residue K206 is modified to N6-(pyridoxal phosphate)lysine. T243 serves as a coordination point for pyridoxal 5'-phosphate. C328 functions as the Cysteine persulfide intermediate in the catalytic mechanism. C328 provides a ligand contact to [2Fe-2S] cluster.

The protein belongs to the class-V pyridoxal-phosphate-dependent aminotransferase family. NifS/IscS subfamily. In terms of assembly, homodimer. Forms a heterotetramer with IscU, interacts with other sulfur acceptors. Pyridoxal 5'-phosphate is required as a cofactor.

It localises to the cytoplasm. The enzyme catalyses (sulfur carrier)-H + L-cysteine = (sulfur carrier)-SH + L-alanine. It functions in the pathway cofactor biosynthesis; iron-sulfur cluster biosynthesis. Its function is as follows. Master enzyme that delivers sulfur to a number of partners involved in Fe-S cluster assembly, tRNA modification or cofactor biosynthesis. Catalyzes the removal of elemental sulfur atoms from cysteine to produce alanine. Functions as a sulfur delivery protein for Fe-S cluster synthesis onto IscU, an Fe-S scaffold assembly protein, as well as other S acceptor proteins. In Aeromonas salmonicida (strain A449), this protein is Cysteine desulfurase IscS.